A 62-amino-acid polypeptide reads, in one-letter code: Photosystem II reaction center protein Z (62 aa).

The next 2 membrane-spanning stretches (helical) occupy residues S8–A28 and F41–I61.

It belongs to the PsbZ family. In terms of assembly, PSII is composed of 1 copy each of membrane proteins PsbA, PsbB, PsbC, PsbD, PsbE, PsbF, PsbH, PsbI, PsbJ, PsbK, PsbL, PsbM, PsbT, PsbY, PsbZ, Psb30/Ycf12, at least 3 peripheral proteins of the oxygen-evolving complex and a large number of cofactors. It forms dimeric complexes.

It is found in the plastid. Its subcellular location is the chloroplast thylakoid membrane. May control the interaction of photosystem II (PSII) cores with the light-harvesting antenna, regulates electron flow through the 2 photosystem reaction centers. PSII is a light-driven water plastoquinone oxidoreductase, using light energy to abstract electrons from H(2)O, generating a proton gradient subsequently used for ATP formation. In Staurastrum punctulatum (Green alga), this protein is Photosystem II reaction center protein Z.